Consider the following 148-residue polypeptide: 3-hydroxyacyl-[acyl-carrier-protein] dehydratase FabZ (148 aa).

His-48 is an active-site residue.

Belongs to the thioester dehydratase family. FabZ subfamily.

It is found in the cytoplasm. The catalysed reaction is a (3R)-hydroxyacyl-[ACP] = a (2E)-enoyl-[ACP] + H2O. Its function is as follows. Involved in unsaturated fatty acids biosynthesis. Catalyzes the dehydration of short chain beta-hydroxyacyl-ACPs and long chain saturated and unsaturated beta-hydroxyacyl-ACPs. This chain is 3-hydroxyacyl-[acyl-carrier-protein] dehydratase FabZ, found in Campylobacter curvus (strain 525.92).